We begin with the raw amino-acid sequence, 329 residues long: uncharacterized protein (329 aa).

The 159-residue stretch at P27–K185 folds into the Nudix hydrolase domain. The next 3 helical transmembrane spans lie at V123–L143, P227–S247, and L303–I323.

The protein resides in the membrane. This is an uncharacterized protein from Schizosaccharomyces pombe (strain 972 / ATCC 24843) (Fission yeast).